The sequence spans 152 residues: Ribonuclease H (152 aa).

The region spanning 6–147 (KKNRVIAYTD…ADELANKAIA (142 aa)) is the RNase H type-1 domain. Positions 15, 53, 75, and 139 each coordinate Mg(2+).

This sequence belongs to the RNase H family. Monomer. Mg(2+) serves as cofactor.

It is found in the cytoplasm. It catalyses the reaction Endonucleolytic cleavage to 5'-phosphomonoester.. Endonuclease that specifically degrades the RNA of RNA-DNA hybrids. In Francisella tularensis subsp. tularensis (strain FSC 198), this protein is Ribonuclease H.